Here is an 868-residue protein sequence, read N- to C-terminus: Leucine--tRNA ligase (868 aa).

The 'HIGH' region signature appears at 42–52 (PYPSGKLHMGH). Positions 627–631 (KMSKS) match the 'KMSKS' region motif. Lys-630 is a binding site for ATP.

The protein belongs to the class-I aminoacyl-tRNA synthetase family.

It is found in the cytoplasm. It catalyses the reaction tRNA(Leu) + L-leucine + ATP = L-leucyl-tRNA(Leu) + AMP + diphosphate. This Pseudomonas syringae pv. syringae (strain B728a) protein is Leucine--tRNA ligase.